A 193-amino-acid polypeptide reads, in one-letter code: MGLTGTNTTLVAPQPKGILDPRTGKPVGSDDAFFNDLNGELSDKGFIVTSADALITWARTGSLMWMTFGLACCAVEMMHISMPRYDAERFGIAPRASPRQSDVMIVAGTLTNKMAPALRKVYDQMPEPRYVISMGSCANGGGYYHYSYSVVRGCDRVVPVDIYVPGCPPTAEALLYGILLLQKKIRRTGTIER.

A compositionally biased stretch (polar residues) spans 1 to 11 (MGLTGTNTTLV). The disordered stretch occupies residues 1-23 (MGLTGTNTTLVAPQPKGILDPRT). [4Fe-4S] cluster is bound by residues C72, C73, C137, and C167.

Belongs to the complex I 20 kDa subunit family. NDH-1 is composed of 14 different subunits. Subunits NuoB, C, D, E, F, and G constitute the peripheral sector of the complex. The cofactor is [4Fe-4S] cluster.

It localises to the cell inner membrane. It catalyses the reaction a quinone + NADH + 5 H(+)(in) = a quinol + NAD(+) + 4 H(+)(out). Functionally, NDH-1 shuttles electrons from NADH, via FMN and iron-sulfur (Fe-S) centers, to quinones in the respiratory chain. Couples the redox reaction to proton translocation (for every two electrons transferred, four hydrogen ions are translocated across the cytoplasmic membrane), and thus conserves the redox energy in a proton gradient. This chain is NADH-quinone oxidoreductase subunit B, found in Brucella canis (strain ATCC 23365 / NCTC 10854 / RM-666).